The chain runs to 553 residues: Telomere repeat-binding protein 2 (553 aa).

The interval 147–170 is disordered; sequence SSTEVGACGNGSPNESRDDVNLFS. The Ubiquitin-like domain maps to 285 to 364; it reads VKLRIKSFRV…HLDSLGFSLE (80 aa). Residues 394–413 form a disordered region; the sequence is ALDSSHEPEPSPADSFGKLG. In terms of domain architecture, HTH myb-type spans 448–507; the sequence is AQRRIRRPFSVTEVEALVQAVEKLGTGRWRDVKVRAFEDADHRTYVDLKDKWKTLVHTAR. Residues 476–503 constitute a DNA-binding region (H-T-H motif); that stretch reads WRDVKVRAFEDADHRTYVDLKDKWKTLV.

In terms of assembly, homodimer and heterodimer with TRP1. Interacts with SNL1. Expressed ubiquitously. Highest expression in flowers and leaves.

The protein resides in the nucleus. Functionally, binds specifically to the plant telomeric double-stranded DNA sequences. At least 2 repeats of telomeric sequences are required for binding. Induces DNA bending. The chain is Telomere repeat-binding protein 2 (TRP2) from Arabidopsis thaliana (Mouse-ear cress).